Here is a 158-residue protein sequence, read N- to C-terminus: Phosphopantetheine adenylyltransferase (158 aa).

Serine 8 is a substrate binding site. ATP is bound by residues 8–9 (SF) and histidine 16. Substrate is bound by residues lysine 40, threonine 72, and arginine 86. Residues 87–89 (GLR), glutamate 97, and 122–128 (HSFLSSS) contribute to the ATP site.

Belongs to the bacterial CoaD family. As to quaternary structure, homohexamer. Mg(2+) is required as a cofactor.

It is found in the cytoplasm. The catalysed reaction is (R)-4'-phosphopantetheine + ATP + H(+) = 3'-dephospho-CoA + diphosphate. It functions in the pathway cofactor biosynthesis; coenzyme A biosynthesis; CoA from (R)-pantothenate: step 4/5. Its function is as follows. Reversibly transfers an adenylyl group from ATP to 4'-phosphopantetheine, yielding dephospho-CoA (dPCoA) and pyrophosphate. The protein is Phosphopantetheine adenylyltransferase of Prochlorococcus marinus (strain NATL1A).